A 447-amino-acid chain; its full sequence is MNPNQKIITIGSICMGIGIISLILQIGNIISMWVSHSIQTENQNHHEACNPSIAGQDAASVALAGNSSLCPISGWAIYSKDNGIRIGSKGDVFVIREPFISCSHLECRTFFLTQGALLNDKHSNGTVKDRSPYRTLMSCPVGEAPSPYNSRFVSVAWSASACHDGMGWLTIGISGPDNGAVAVLKYNGIITDTIKSWKNNILRTQESECACINGSCFTIMTDGPSNGQASYKIFKIEKGKVVKSSELNAPNYHYEECSCYPDAGEVMCVCRDNWHGSNRPWVSFNKNLDYQIGYICSGVFGDNPRPNDGTGSCGPVSSNGAYGIKGFSFKYGNGVWIGRTKSTSSRSGFEMIWDPNGWTETDSSFSVKQDIVAITDWSGYSGSFVQHPELTGLDCMRPCFWVELIRGRPNHNTIWTSGSSISFCGVNSDTVGWSWPDGAELPFTIDK.

Over 1–6 the chain is Intravirion; it reads MNPNQK. Residues 7-27 form a helical membrane-spanning segment; sequence IITIGSICMGIGIISLILQIG. The segment at 11–33 is involved in apical transport and lipid raft association; it reads GSICMGIGIISLILQIGNIISMW. Over 28–447 the chain is Virion surface; the sequence is NIISMWVSHS…GAELPFTIDK (420 aa). The segment at 36–68 is hypervariable stalk region; the sequence is HSIQTENQNHHEACNPSIAGQDAASVALAGNSS. The N-linked (GlcNAc...) asparagine; by host glycan is linked to Asn66. The segment at 69-447 is head of neuraminidase; sequence LCPISGWAIY…GAELPFTIDK (379 aa). Disulfide bonds link Cys70-Cys395, Cys102-Cys107, Cys162-Cys209, Cys211-Cys216, Cys257-Cys270, Cys259-Cys268, Cys296-Cys313, and Cys399-Cys424. Arg96 contacts substrate. Asn124 carries N-linked (GlcNAc...) asparagine; by host glycosylation. Asp129 serves as the catalytic Proton donor/acceptor. Arg130 contacts substrate. Asn213 is a glycosylation site (N-linked (GlcNAc...) asparagine; by host). 255–256 lines the substrate pocket; sequence EE. A substrate-binding site is contributed by Arg271. Residues Asp272, Gly276, and Asp302 each coordinate Ca(2+). Arg346 provides a ligand contact to substrate. Catalysis depends on Tyr380, which acts as the Nucleophile.

Belongs to the glycosyl hydrolase 34 family. Homotetramer. Ca(2+) is required as a cofactor. In terms of processing, N-glycosylated.

It is found in the virion membrane. The protein localises to the host apical cell membrane. The catalysed reaction is Hydrolysis of alpha-(2-&gt;3)-, alpha-(2-&gt;6)-, alpha-(2-&gt;8)- glycosidic linkages of terminal sialic acid residues in oligosaccharides, glycoproteins, glycolipids, colominic acid and synthetic substrates.. Inhibited by the neuraminidase inhibitors zanamivir (Relenza) and oseltamivir (Tamiflu). These drugs interfere with the release of progeny virus from infected cells and are effective against all influenza strains. Resistance to neuraminidase inhibitors is quite rare. Functionally, catalyzes the removal of terminal sialic acid residues from viral and cellular glycoconjugates. Cleaves off the terminal sialic acids on the glycosylated HA during virus budding to facilitate virus release. Additionally helps virus spread through the circulation by further removing sialic acids from the cell surface. These cleavages prevent self-aggregation and ensure the efficient spread of the progeny virus from cell to cell. Otherwise, infection would be limited to one round of replication. Described as a receptor-destroying enzyme because it cleaves a terminal sialic acid from the cellular receptors. May facilitate viral invasion of the upper airways by cleaving the sialic acid moieties on the mucin of the airway epithelial cells. Likely to plays a role in the budding process through its association with lipid rafts during intracellular transport. May additionally display a raft-association independent effect on budding. Plays a role in the determination of host range restriction on replication and virulence. Sialidase activity in late endosome/lysosome traffic seems to enhance virus replication. The sequence is that of Neuraminidase from Aves.